The following is a 270-amino-acid chain: Pyrroline-5-carboxylate reductase (270 aa).

It belongs to the pyrroline-5-carboxylate reductase family.

It localises to the cytoplasm. The enzyme catalyses L-proline + NADP(+) = (S)-1-pyrroline-5-carboxylate + NADPH + 2 H(+). It catalyses the reaction L-proline + NAD(+) = (S)-1-pyrroline-5-carboxylate + NADH + 2 H(+). It participates in amino-acid biosynthesis; L-proline biosynthesis; L-proline from L-glutamate 5-semialdehyde: step 1/1. Its function is as follows. Catalyzes the reduction of 1-pyrroline-5-carboxylate (PCA) to L-proline. The chain is Pyrroline-5-carboxylate reductase from Methanosarcina acetivorans (strain ATCC 35395 / DSM 2834 / JCM 12185 / C2A).